A 431-amino-acid chain; its full sequence is MSVSAHAAQKMPAPSSAMMRPVMILAGGTGGHIFPGLAVAKVLRARGVPVTWLGADDAMETRLVPQHDIPIDTLAISGLRGKGVVKLLGAPVRVMRAVRAAGFVLRKRRPRAVISFGGFAAGPGGLAARLLGAPLLVHEQNRAPGMTNKVLSRFARRVLTGFPGSFAGEEAVGNPVRAEIAALPAPADRLVGRTGPVRVLVLGGSQGARALNQAVPTALAALGHPEVELRHQCGEKLRAEAEAAYLQAGVNASVEPFIADMAAAYAWADLVVCRAGASTLAELCAAGVGSVLVPFAAAVDDHQTRNAEYLVGADAAVLLKQDDSLAVRLQQVLQTLLADPTRRLSMANAARTLAKPDAAERIADIILQEAGSGDGQPPAVQERAGLGIRNKQTHKQGSMQTSVNGDRSAQLIATNPQSRLPNPGASAGGAP.

UDP-N-acetyl-alpha-D-glucosamine-binding positions include 29–31 (TGG), N141, R177, S205, I258, and Q303. Positions 370 to 431 (AGSGDGQPPA…NPGASAGGAP (62 aa)) are disordered. Residues 395 to 420 (KQGSMQTSVNGDRSAQLIATNPQSRL) are compositionally biased toward polar residues.

This sequence belongs to the glycosyltransferase 28 family. MurG subfamily.

It localises to the cell inner membrane. It catalyses the reaction di-trans,octa-cis-undecaprenyl diphospho-N-acetyl-alpha-D-muramoyl-L-alanyl-D-glutamyl-meso-2,6-diaminopimeloyl-D-alanyl-D-alanine + UDP-N-acetyl-alpha-D-glucosamine = di-trans,octa-cis-undecaprenyl diphospho-[N-acetyl-alpha-D-glucosaminyl-(1-&gt;4)]-N-acetyl-alpha-D-muramoyl-L-alanyl-D-glutamyl-meso-2,6-diaminopimeloyl-D-alanyl-D-alanine + UDP + H(+). It functions in the pathway cell wall biogenesis; peptidoglycan biosynthesis. In terms of biological role, cell wall formation. Catalyzes the transfer of a GlcNAc subunit on undecaprenyl-pyrophosphoryl-MurNAc-pentapeptide (lipid intermediate I) to form undecaprenyl-pyrophosphoryl-MurNAc-(pentapeptide)GlcNAc (lipid intermediate II). The polypeptide is UDP-N-acetylglucosamine--N-acetylmuramyl-(pentapeptide) pyrophosphoryl-undecaprenol N-acetylglucosamine transferase (Xanthomonas euvesicatoria pv. vesicatoria (strain 85-10) (Xanthomonas campestris pv. vesicatoria)).